Reading from the N-terminus, the 83-residue chain is U20-theraphotoxin-Cg1a 1 (83 aa).

An N-terminal signal peptide occupies residues 1-21 (MKVSVLITLAVLGVMFVWTSA). A propeptide spanning residues 22–47 (AELEERGSDQPAWLKSLERIFQSEER) is cleaved from the precursor. Intrachain disulfides connect Cys-49–Cys-63, Cys-56–Cys-68, and Cys-62–Cys-76.

The protein belongs to the neurotoxin 10 (Hwtx-1) family. 40 (Jztx-35) subfamily. In terms of tissue distribution, expressed by the venom gland.

It is found in the secreted. In terms of biological role, probable ion channel inhibitor. The protein is U20-theraphotoxin-Cg1a 1 of Chilobrachys guangxiensis (Chinese earth tiger tarantula).